Here is a 141-residue protein sequence, read N- to C-terminus: Small ribosomal subunit protein bS6 (141 aa).

The disordered stretch occupies residues 96–141 (VTGQSEMLKAEENRSERRERRERPEHADSAEGDDSNDSDSSDNADE). The segment covering 103–124 (LKAEENRSERRERRERPEHADS) has biased composition (basic and acidic residues). The span at 125-141 (AEGDDSNDSDSSDNADE) shows a compositional bias: acidic residues.

Belongs to the bacterial ribosomal protein bS6 family.

Its function is as follows. Binds together with bS18 to 16S ribosomal RNA. The protein is Small ribosomal subunit protein bS6 of Pseudomonas putida (strain ATCC 700007 / DSM 6899 / JCM 31910 / BCRC 17059 / LMG 24140 / F1).